Consider the following 423-residue polypeptide: Serine--tRNA ligase (423 aa).

Residue 231–233 coordinates L-serine; the sequence is TAE. ATP is bound at residue 262–264; the sequence is RSE. Glutamate 285 contributes to the L-serine binding site. Residue 349-352 participates in ATP binding; the sequence is EISS. Serine 384 contributes to the L-serine binding site.

The protein belongs to the class-II aminoacyl-tRNA synthetase family. Type-1 seryl-tRNA synthetase subfamily. In terms of assembly, homodimer. The tRNA molecule binds across the dimer.

Its subcellular location is the cytoplasm. The catalysed reaction is tRNA(Ser) + L-serine + ATP = L-seryl-tRNA(Ser) + AMP + diphosphate + H(+). It catalyses the reaction tRNA(Sec) + L-serine + ATP = L-seryl-tRNA(Sec) + AMP + diphosphate + H(+). The protein operates within aminoacyl-tRNA biosynthesis; selenocysteinyl-tRNA(Sec) biosynthesis; L-seryl-tRNA(Sec) from L-serine and tRNA(Sec): step 1/1. Catalyzes the attachment of serine to tRNA(Ser). Is also able to aminoacylate tRNA(Sec) with serine, to form the misacylated tRNA L-seryl-tRNA(Sec), which will be further converted into selenocysteinyl-tRNA(Sec). The chain is Serine--tRNA ligase from Lactococcus lactis subsp. cremoris (strain SK11).